Here is a 300-residue protein sequence, read N- to C-terminus: tRNA dimethylallyltransferase (300 aa).

11 to 18 is an ATP binding site; the sequence is GPTAVGKS. Position 13–18 (13–18) interacts with substrate; the sequence is TAVGKS. Residues 35 to 38 are interaction with substrate tRNA; the sequence is DSIQ.

This sequence belongs to the IPP transferase family. As to quaternary structure, monomer. Requires Mg(2+) as cofactor.

It catalyses the reaction adenosine(37) in tRNA + dimethylallyl diphosphate = N(6)-dimethylallyladenosine(37) in tRNA + diphosphate. In terms of biological role, catalyzes the transfer of a dimethylallyl group onto the adenine at position 37 in tRNAs that read codons beginning with uridine, leading to the formation of N6-(dimethylallyl)adenosine (i(6)A). This is tRNA dimethylallyltransferase from Borrelia duttonii (strain Ly).